The chain runs to 467 residues: Cysteine--tRNA ligase (467 aa).

Zn(2+) is bound at residue Cys-29. The short motif at 31–41 (PTVYNYVHIGN) is the 'HIGH' region element. Residues Cys-209, His-234, and Glu-238 each coordinate Zn(2+). The 'KMSKS' region signature appears at 267–271 (KMSKS). Lys-270 is an ATP binding site.

It belongs to the class-I aminoacyl-tRNA synthetase family. As to quaternary structure, monomer. Zn(2+) is required as a cofactor.

Its subcellular location is the cytoplasm. The enzyme catalyses tRNA(Cys) + L-cysteine + ATP = L-cysteinyl-tRNA(Cys) + AMP + diphosphate. The polypeptide is Cysteine--tRNA ligase (Xylella fastidiosa (strain Temecula1 / ATCC 700964)).